A 576-amino-acid polypeptide reads, in one-letter code: MRTNFCGTLNVSHVGKTIKLCGWVNKFRNLKEILFIDIRDQTGIIQVLFSKKSELLFKKAADLRNEFCIQVLGIVQERITKNKNYTMSTGEIEIFALELKIFNKSQPLPIDLKSCNIEETRLKFRYLDLRHPNMIRNIIIRNDITIIIRNFMKKNKFLDIETPILTKSTPEGARDYIVPSRIHKNKYYALPQSPQLFKQLLMISGIDRYYQIAKCFRDEDLRSDRQPEFTQIDIEVSFLNAKKVRKIIERMITSVWNKIINVHLKKFQKLSFYDAIKMYGTDKPDLRNPIQLIDVTNIIHVKNNINAITLPNKKTQQNIVIAMCIPRGMSLNINYINSYHHLVQKYTKNKLFNVEVLNHCPIKEQKKTSFHKKPSSDLTFQLISKTSAKHGDMIFYLSEKSPLVYEIMGKLRIELGKDLNLIDYNSWKPLWITNFPLFKKNELNQYISTHHPFTAPKYMKIDTSITNYEEIVADSYDLVINGYEIGSGSVRIHDLELQKTVFNILGINTVLQKNNFNFFLNALKYGTPPHAGIALGLDRITMLLTNSHNLRDVIAFPKTTTGSCLTTGAPSKIIHF.

L-aspartate is bound at residue E171. Positions 195-198 (QLFK) are aspartate. R217 contributes to the L-aspartate binding site. Residues 217–219 (RDE) and Q226 contribute to the ATP site. H450 contacts L-aspartate. ATP is bound at residue E484. R491 contacts L-aspartate. Residue 536–539 (GLDR) participates in ATP binding.

This sequence belongs to the class-II aminoacyl-tRNA synthetase family. Type 1 subfamily. As to quaternary structure, homodimer.

The protein localises to the cytoplasm. It catalyses the reaction tRNA(Asp) + L-aspartate + ATP = L-aspartyl-tRNA(Asp) + AMP + diphosphate. Its function is as follows. Catalyzes the attachment of L-aspartate to tRNA(Asp) in a two-step reaction: L-aspartate is first activated by ATP to form Asp-AMP and then transferred to the acceptor end of tRNA(Asp). In Buchnera aphidicola subsp. Baizongia pistaciae (strain Bp), this protein is Aspartate--tRNA ligase.